A 94-amino-acid chain; its full sequence is Small polypeptide ROTUNDIFOLIA LIKE 1 (94 aa).

Residues 1–13 show a composition bias toward polar residues; that stretch reads MRQCASASSSTSR. The tract at residues 1–26 is disordered; the sequence is MRQCASASSSTSRPPEAAGEEGKRRR. A required for DVL/RTFL small polypeptide activity region spans residues 28 to 59; sequence RRGWLLQAAAREQRSRFYIFRRCVAMLLCWYK. A helical transmembrane segment spans residues 63 to 82; it reads ITPYNVVPLGIYGLVWFATM.

The protein belongs to the DVL/RTFL small polypeptides family.

Its subcellular location is the cell membrane. Functionally, small polypeptide acting as a regulatory molecule which coordinates cellular responses required for differentiation, growth and development, probably by restricting polar cell proliferation in lateral organs. In Oryza sativa subsp. japonica (Rice), this protein is Small polypeptide ROTUNDIFOLIA LIKE 1.